A 160-amino-acid chain; its full sequence is Nucleotide-binding protein Ping_2261 (160 aa).

This sequence belongs to the YajQ family.

In terms of biological role, nucleotide-binding protein. This Psychromonas ingrahamii (strain DSM 17664 / CCUG 51855 / 37) protein is Nucleotide-binding protein Ping_2261.